Reading from the N-terminus, the 827-residue chain is MEESSVTVGTIDVSYLPSSSEYSLGRCKHTSEDWVDCGFKPTFFRSATLKWKESLMSRKRPFVGRCCYSCTPQSWERFFNPSIPSLGLRNVIYINETHTRHRGWLARRLSYILFVQERDVHKGMFATSVTENVLSSSRVQEAIAEVAAELNPDGSAQQQSKAIQKVKRKARKILQEMVATVSPGMIRLTGWVLLKLFNSFFWNIQIHKGQLEMVKAATETNLPLLFLPVHRSHIDYLLLTFILFCHNIKAPYIASGNNLNIPVFSTLIHKLGGFFIRRRLDETPDGRKDILYRALLHGHVVELLRQQQFLEIFLEGTRSRSGKTSCARAGLLSVVVDTLSSNTIPDILVIPVGISYDRIIEGHYNGEQLGKPKKNESLWSVARGVIRMLRKNYGYVRVDFAQPFSLKEYLEGQSQKPVSAPLSLEQALLPAILPSRPNDVADEHQDLSSNESRNPADEAFRRRLIANLAEHILFTASKSCAIMSTHIVACLLLYRHRQGIHLSTLVEDFFVMKEEVLARDFDLGFSGNSEDVVMHAIQLLGNCVTITHTSRKDEFFITPSTTVPSVFELNFYSNGVLHVFIMEAIIACSIYAVLNKRCSGGSAGGLGNLISQEQLVRKAASLCYLLSNEGTISLPCQTFYQVCHETVGKFIQYGILTVAEQDDQEDVSPGLAEQQWDKKLPELNWRSDEEDEDSDFGEEQRDCYLKVSQSKEHQQFITFLQRLLGPLLEAYSSAAIFVHNFSGPVPESEYLQKLHRYLITRTERNVAVYAESATYCLVKNAVKMFKDIGVFKETKQKRVSVLELSSTFLPQCNRQKLLEYILSFVVL.

Residues 1–87 lie on the Cytoplasmic side of the membrane; it reads MEESSVTVGT…FFNPSIPSLG (87 aa). An important for mitochondrial localization region spans residues 80–120; sequence NPSIPSLGLRNVIYINETHTRHRGWLARRLSYILFVQERDV. The stretch at 88 to 118 is an intramembrane region; the sequence is LRNVIYINETHTRHRGWLARRLSYILFVQER. At 119–827 the chain is on the cytoplasmic side; sequence DVHKGMFATS…LEYILSFVVL (709 aa). The HXXXXD motif motif lies at 230–235; that stretch reads HRSHID. CoA contacts are provided by Arg-278, Arg-279, Lys-288, Arg-293, and Arg-328. A Phosphoserine modification is found at Ser-380. Arg-462 provides a ligand contact to CoA. 2 positions are modified to phosphoserine: Ser-687 and Ser-694. N6-acetyllysine is present on residues Lys-779 and Lys-783.

The protein belongs to the GPAT/DAPAT family. Highest levels in liver, intermediate levels in muscle and kidney, and lowest levels in lung and brain.

It is found in the mitochondrion outer membrane. It catalyses the reaction sn-glycerol 3-phosphate + an acyl-CoA = a 1-acyl-sn-glycero-3-phosphate + CoA. The catalysed reaction is (9Z,12Z)-octadecadienoyl-CoA + sn-glycerol 3-phosphate = 1-(9Z,12Z)-octadecadienoyl-sn-glycero-3-phosphate + CoA. It carries out the reaction sn-glycerol 3-phosphate + (9Z)-octadecenoyl-CoA = 1-(9Z-octadecenoyl)-sn-glycero-3-phosphate + CoA. The enzyme catalyses sn-glycerol 3-phosphate + octadecanoyl-CoA = 1-octadecanoyl-sn-glycero-3-phosphate + CoA. It catalyses the reaction sn-glycerol 3-phosphate + hexadecanoyl-CoA = 1-hexadecanoyl-sn-glycero-3-phosphate + CoA. The catalysed reaction is dodecanoyl-CoA + sn-glycerol 3-phosphate = 1-dodecanoyl-sn-glycerol 3-phosphate + CoA. It carries out the reaction 1-acyl-sn-glycero-3-phospho-(1'-sn-glycerol) + an acyl-CoA = a 1,2-diacyl-sn-glycero-3-phospho-(1'-sn-glycerol) + CoA. Its pathway is phospholipid metabolism; CDP-diacylglycerol biosynthesis; CDP-diacylglycerol from sn-glycerol 3-phosphate: step 1/3. Its function is as follows. Mitochondrial membrane protein that catalyzes the essential first step of biosynthesis of glycerolipids such as triglycerides, phosphatidic acids and lysophosphatidic acids. Esterifies acyl-group from acyl-coenzyme A (acyl-CoA) to the sn-1 position of glycerol-3-phosphate, to produce lysophosphatidic acid. Has a narrow hydrophobic binding cleft that selects for a linear acyl chain. Catalytic activity is higher for substrates with a 16-carbon acyl chain. This chain is Glycerol-3-phosphate acyltransferase 1, mitochondrial, found in Mus musculus (Mouse).